We begin with the raw amino-acid sequence, 130 residues long: MSATQNYGTGRRKTATARVFLRPGTGNISINNRSLDVFFGRETARMVVRQPLELTETVEKFDIYVTVSGGGVSGQAGAIRHGITRALMEYDETLRGALRRAGYVTRDAREVERKKVGLRKARKRPQYSKR.

This sequence belongs to the universal ribosomal protein uS9 family.

This is Small ribosomal subunit protein uS9 from Pseudomonas entomophila (strain L48).